The chain runs to 160 residues: SsrA-binding protein (160 aa).

The protein belongs to the SmpB family.

The protein resides in the cytoplasm. In terms of biological role, required for rescue of stalled ribosomes mediated by trans-translation. Binds to transfer-messenger RNA (tmRNA), required for stable association of tmRNA with ribosomes. tmRNA and SmpB together mimic tRNA shape, replacing the anticodon stem-loop with SmpB. tmRNA is encoded by the ssrA gene; the 2 termini fold to resemble tRNA(Ala) and it encodes a 'tag peptide', a short internal open reading frame. During trans-translation Ala-aminoacylated tmRNA acts like a tRNA, entering the A-site of stalled ribosomes, displacing the stalled mRNA. The ribosome then switches to translate the ORF on the tmRNA; the nascent peptide is terminated with the 'tag peptide' encoded by the tmRNA and targeted for degradation. The ribosome is freed to recommence translation, which seems to be the essential function of trans-translation. This is SsrA-binding protein from Photorhabdus laumondii subsp. laumondii (strain DSM 15139 / CIP 105565 / TT01) (Photorhabdus luminescens subsp. laumondii).